Reading from the N-terminus, the 38-residue chain is Cytochrome b6-f complex subunit 5 (38 aa).

Residues 5–25 (LLSGIVLGSIPITLAGSFVTA) form a helical membrane-spanning segment.

The protein belongs to the PetG family. The 4 large subunits of the cytochrome b6-f complex are cytochrome b6, subunit IV (17 kDa polypeptide, PetD), cytochrome f and the Rieske protein, while the 4 small subunits are PetG, PetL, PetM and PetN. The complex functions as a dimer.

It is found in the plastid. The protein resides in the chloroplast thylakoid membrane. In terms of biological role, component of the cytochrome b6-f complex, which mediates electron transfer between photosystem II (PSII) and photosystem I (PSI), cyclic electron flow around PSI, and state transitions. PetG is required for either the stability or assembly of the cytochrome b6-f complex. In Huperzia lucidula (Shining clubmoss), this protein is Cytochrome b6-f complex subunit 5.